Consider the following 274-residue polypeptide: Anamorsin homolog (274 aa).

Residues 1–154 form an N-terminal SAM-like domain region; it reads MDRTRKQCSV…KKPSWKIGSS (154 aa). The tract at residues 154–185 is linker; sequence SFALKKSTKGSVKVNLDDDLIDEDSLLTEEDM. Residues Cys-196, Cys-205, Cys-208, and Cys-210 each coordinate [2Fe-2S] cluster. Residues 196 to 210 form a fe-S binding site A region; that stretch reads CEVGSTRKACKNCTC. The [4Fe-4S] cluster site is built by Cys-235, Cys-238, Cys-246, and Cys-249. 2 short sequence motifs (cx2C motif) span residues 235 to 238 and 246 to 249; these read CGSC and CSTC. The fe-S binding site B stretch occupies residues 235 to 249; sequence CGSCGLGDAFRCSTC.

It belongs to the anamorsin family. In terms of assembly, monomer. It depends on [2Fe-2S] cluster as a cofactor. [4Fe-4S] cluster serves as cofactor.

The protein localises to the cytoplasm. It is found in the mitochondrion intermembrane space. Component of the cytosolic iron-sulfur (Fe-S) protein assembly (CIA) machinery. Required for the maturation of extramitochondrial Fe-S proteins. Part of an electron transfer chain functioning in an early step of cytosolic Fe-S biogenesis, facilitating the de novo assembly of a [4Fe-4S] cluster on the cytosolic Fe-S scaffold complex. Electrons are transferred from NADPH via a FAD- and FMN-containing diflavin oxidoreductase. Together with the diflavin oxidoreductase, also required for the assembly of the diferric tyrosyl radical cofactor of ribonucleotide reductase (RNR), probably by providing electrons for reduction during radical cofactor maturation in the catalytic small subunit. The protein is Anamorsin homolog of Ricinus communis (Castor bean).